The following is a 971-amino-acid chain: Kinesin-like protein KIN-6 (971 aa).

Disordered regions lie at residues 1-44 and 93-121; these read MEEK…SSLA and TTTT…RNPE. Residues 29 to 39 show a composition bias toward low complexity; that stretch reads ATPFTTTTKPP. Residues 76–460 enclose the Kinesin motor domain; the sequence is SLKIFLRIKP…LRQASPYMKI (385 aa). An ATP-binding site is contributed by 202–209; that stretch reads GPSGSGKT. Basic and acidic residues predominate over residues 700–709; that stretch reads RREAGSEESS. Disordered regions lie at residues 700–856 and 872–917; these read RREA…TEEM and KTTN…RLQP. Polar residues predominate over residues 768-783; the sequence is QSVNSEENVGIPSTIT. Basic and acidic residues predominate over residues 785–797; it reads VEAEVTDFQRDQN. A compositionally biased stretch (polar residues) spans 809–827; the sequence is EVSQDCINSGLSNVQTKSA. A compositionally biased stretch (basic and acidic residues) spans 831 to 842; that stretch reads RFPDSEKQERNR. Basic residues predominate over residues 903 to 915; that stretch reads KKQKNGQKPKRRL.

It belongs to the TRAFAC class myosin-kinesin ATPase superfamily. Kinesin family. KIN-6 subfamily.

The sequence is that of Kinesin-like protein KIN-6 from Arabidopsis thaliana (Mouse-ear cress).